Consider the following 259-residue polypeptide: Imidazole glycerol phosphate synthase subunit HisF (259 aa).

Active-site residues include Asp11 and Asp130.

Belongs to the HisA/HisF family. Heterodimer of HisH and HisF.

The protein resides in the cytoplasm. The enzyme catalyses 5-[(5-phospho-1-deoxy-D-ribulos-1-ylimino)methylamino]-1-(5-phospho-beta-D-ribosyl)imidazole-4-carboxamide + L-glutamine = D-erythro-1-(imidazol-4-yl)glycerol 3-phosphate + 5-amino-1-(5-phospho-beta-D-ribosyl)imidazole-4-carboxamide + L-glutamate + H(+). Its pathway is amino-acid biosynthesis; L-histidine biosynthesis; L-histidine from 5-phospho-alpha-D-ribose 1-diphosphate: step 5/9. IGPS catalyzes the conversion of PRFAR and glutamine to IGP, AICAR and glutamate. The HisF subunit catalyzes the cyclization activity that produces IGP and AICAR from PRFAR using the ammonia provided by the HisH subunit. The sequence is that of Imidazole glycerol phosphate synthase subunit HisF from Desulfosudis oleivorans (strain DSM 6200 / JCM 39069 / Hxd3) (Desulfococcus oleovorans).